The chain runs to 339 residues: MVHGRLCNRDGWILTAMVVTEFSNVGVNTLVKAATSKGLSPFVVLVYSYTFGSLLLLPLTFFSFRSRSLPPLTFSILCNMGILGLIASAFQILGYNGIKYSSPTLSSAMSNVNPAFTFILAVVFRMENISLGKKSSVAKVLGTILSIIGALVVTLYHGPMLMSSHSDWIIGGGLLALQYILVSVSYLVMAHTMGRYPSAVVVTLVHNVCIAVVCAFVSLLAEKDNPKAWVIRFDITLITVVATGILNSGYYVIHTWAVSHKGPVYLSMFKPLSILIAAVSTFIFLGESLYLGSVMGGILISIGFYMVLWGKAKEDKVDIIGAIESSPSHNAPLLDNFKS.

10 helical membrane passes run 11-31, 42-62, 74-94, 104-124, 140-160, 168-188, 200-220, 233-253, 266-286, and 289-309; these read GWIL…NTLV, FVVL…LTFF, FSIL…QILG, TLSS…AVVF, VLGT…HGPM, WIIG…SYLV, VVVT…VSLL, FDIT…YYVI, LSMF…IFLG, and LYLG…MVLW. An EamA domain is found at 29 to 154; the sequence is TLVKAATSKG…LSIIGALVVT (126 aa).

It belongs to the drug/metabolite transporter (DMT) superfamily. Plant drug/metabolite exporter (P-DME) (TC 2.A.7.4) family.

It is found in the membrane. In Arabidopsis thaliana (Mouse-ear cress), this protein is WAT1-related protein At5g40210.